A 154-amino-acid chain; its full sequence is Spermatogenesis-associated protein 19, mitochondrial (154 aa).

The N-terminal 24 residues, 1-24 (MIITTWIMYILARKSIGLPFPPRV), are a transit peptide targeting the mitochondrion. Phosphoserine is present on residues Ser-26 and Ser-116.

Expressed in the testis.

It localises to the mitochondrion outer membrane. The protein localises to the mitochondrion. The protein resides in the cell projection. Its subcellular location is the cilium. It is found in the flagellum. In terms of biological role, essential for sperm motility and male fertility. Plays an important role in sperm motility by regulating the organization and function of the mitochondria and is also required for correct sperm midpiece assembly. The polypeptide is Spermatogenesis-associated protein 19, mitochondrial (Spata19) (Rattus norvegicus (Rat)).